Here is a 522-residue protein sequence, read N- to C-terminus: Cytochrome P450 1A3 (522 aa).

Phenylalanine 229 serves as a coordination point for substrate. Cysteine 463 serves as a coordination point for heme.

It belongs to the cytochrome P450 family. Requires heme as cofactor. As to expression, liver.

The protein localises to the endoplasmic reticulum membrane. It is found in the microsome membrane. It catalyses the reaction an organic molecule + reduced [NADPH--hemoprotein reductase] + O2 = an alcohol + oxidized [NADPH--hemoprotein reductase] + H2O + H(+). Its function is as follows. Cytochromes P450 are a group of heme-thiolate monooxygenases. They oxidize a variety of structurally unrelated compounds, including steroids, fatty acids, and xenobiotics. This Oncorhynchus mykiss (Rainbow trout) protein is Cytochrome P450 1A3 (cyp1a3).